The sequence spans 253 residues: MTRYKATIAYDGTDFAGFQSQTNQRTVQEEIEKVLSKLNSFEPVILQGSGRTDSGVHAFGQVIHFDLNGKARDLERLRFGLDTQTPADIAVKKVELVPDDWHARYQKHEKTYEYYLENSVTRSPFHRHSKAYFRYPLNFELMQGAMAKLVGQHDFTGFTASGSSVDDKVRTIYQAEIIQLDKENFKFIFRGNGFLYKQVRNMVGTVIKIGNDRMPVSQIDKILTSKNRNFAGPTAAPEGLYLKEVKYEPINEI.

Aspartate 53 (nucleophile) is an active-site residue. Tyrosine 112 serves as a coordination point for substrate.

Belongs to the tRNA pseudouridine synthase TruA family. In terms of assembly, homodimer.

It catalyses the reaction uridine(38/39/40) in tRNA = pseudouridine(38/39/40) in tRNA. Functionally, formation of pseudouridine at positions 38, 39 and 40 in the anticodon stem and loop of transfer RNAs. This is tRNA pseudouridine synthase A from Lactococcus lactis subsp. cremoris (strain SK11).